The following is a 525-amino-acid chain: MPITSNEISVEVNGQVYTLPAGSTLGDALKVSRAPYIAGAAIGILKKAAEKRTEKITEYAINTPKGELRIEIKDPESTSGKLWAEHYKEYEGKDIHWESPEALAFGPFEADIKPSRETGNFEAFDVLFGAGGFDPHNTHLILSRKRHSAEYGSPDDGVFASIVTGRKIISKISKEDSILSIEPVIEWERITEKTCTTDLSTPLEDEDSVYTYFEVELSRNAPVGAEHFYALTREGTLKVDAVTSSFISDDSLREVPAPYENFEQRREGAISVRTVGYGTGRIYISREERPSSLVHSVVGQVTKGLELIKLAEKGQKLSVESLPPQIVLLGHSFEEVEPLLSSIGVELIKEGYAGENSVIVRQEPPTTLEILGEAKVKAYAVARTKLIEVELYTEIAPKSIDFFRHALDLKTKTVGKLPVHMIYETTYLFKTEKEMVKYKEILPENTPEKKVLAGEIGITNQAAKRMGTIGVRLIDDDLFGPTGEKFSSTNIIGRIVEPDRLKGIKEGDAIYITEVARKENGGQKN.

The protein belongs to the UPF0288 family.

This chain is UPF0288 protein MM_0912, found in Methanosarcina mazei (strain ATCC BAA-159 / DSM 3647 / Goe1 / Go1 / JCM 11833 / OCM 88) (Methanosarcina frisia).